We begin with the raw amino-acid sequence, 148 residues long: Photosystem I reaction center subunit XI (148 aa).

The next 3 membrane-spanning stretches (helical) occupy residues 48 to 68, 73 to 93, and 122 to 142; these read LEIGLAHGYFLIGPFAQLGPL, IGLLAGFLSTIGLILILTLGL, and GGFFVGACGSAGFAFICLSSI.

The protein belongs to the PsaL family.

It is found in the plastid. The protein resides in the chloroplast thylakoid membrane. This chain is Photosystem I reaction center subunit XI, found in Thalassiosira pseudonana (Marine diatom).